Consider the following 475-residue polypeptide: Cytosolic non-specific dipeptidase (475 aa).

A2 carries the post-translational modification N-acetylalanine. N6-acetyllysine is present on K9. Phosphoserine is present on S58. H99 lines the Mn(2+) pocket. The active site involves D101. D132 provides a ligand contact to Mn(2+). Catalysis depends on E166, which acts as the Proton acceptor. Substrate is bound by residues 166 to 167 (EE), D195, and H228. E167 and D195 together coordinate Mn(2+). S299 carries the phosphoserine modification. 4 residues coordinate substrate: T330, R343, S417, and H445. H445 contacts Mn(2+).

This sequence belongs to the peptidase M20A family. In terms of assembly, homodimer. Mn(2+) is required as a cofactor.

The protein localises to the cytoplasm. The enzyme catalyses Hydrolysis of dipeptides, preferentially hydrophobic dipeptides including prolyl amino acids.. It catalyses the reaction L-threonyl-L-threonine + H2O = 2 L-threonine. The catalysed reaction is L-threonyl-L-serine + H2O = L-threonine + L-serine. It carries out the reaction L-seryl-L-threonine + H2O = L-threonine + L-serine. The enzyme catalyses L-cysteinylglycine + H2O = L-cysteine + glycine. It catalyses the reaction (S)-lactate + L-phenylalanine = N-[(S)-lactoyl]-L-phenylalanine + H2O. Its function is as follows. Catalyzes the peptide bond hydrolysis in dipeptides, displaying a non-redundant activity toward threonyl dipeptides. Mediates threonyl dipeptide catabolism in a tissue-specific way. Has high dipeptidase activity toward cysteinylglycine, an intermediate metabolite in glutathione metabolism. Metabolizes N-lactoyl-amino acids, both through hydrolysis to form lactic acid and amino acids, as well as through their formation by reverse proteolysis. Plays a role in the regulation of cell cycle arrest and apoptosis. This chain is Cytosolic non-specific dipeptidase (CNDP2), found in Pongo abelii (Sumatran orangutan).